We begin with the raw amino-acid sequence, 266 residues long: Tryptophan synthase alpha chain (266 aa).

Catalysis depends on proton acceptor residues glutamate 45 and aspartate 56.

It belongs to the TrpA family. In terms of assembly, tetramer of two alpha and two beta chains.

The catalysed reaction is (1S,2R)-1-C-(indol-3-yl)glycerol 3-phosphate + L-serine = D-glyceraldehyde 3-phosphate + L-tryptophan + H2O. It participates in amino-acid biosynthesis; L-tryptophan biosynthesis; L-tryptophan from chorismate: step 5/5. In terms of biological role, the alpha subunit is responsible for the aldol cleavage of indoleglycerol phosphate to indole and glyceraldehyde 3-phosphate. This Novosphingobium aromaticivorans (strain ATCC 700278 / DSM 12444 / CCUG 56034 / CIP 105152 / NBRC 16084 / F199) protein is Tryptophan synthase alpha chain.